Consider the following 340-residue polypeptide: Probable dual-specificity RNA methyltransferase RlmN (340 aa).

Catalysis depends on Glu-93, which acts as the Proton acceptor. In terms of domain architecture, Radical SAM core spans 99 to 327; the sequence is TAKRLTVCVS…VSVRYSRGLE (229 aa). Cys-106 and Cys-332 are disulfide-bonded. [4Fe-4S] cluster-binding residues include Cys-113, Cys-117, and Cys-120. Residues 160-161, Ser-190, 213-215, and Asn-289 each bind S-adenosyl-L-methionine; these read GE and SLH. Cys-332 serves as the catalytic S-methylcysteine intermediate.

Belongs to the radical SAM superfamily. RlmN family. Requires [4Fe-4S] cluster as cofactor.

The protein resides in the cytoplasm. It carries out the reaction adenosine(2503) in 23S rRNA + 2 reduced [2Fe-2S]-[ferredoxin] + 2 S-adenosyl-L-methionine = 2-methyladenosine(2503) in 23S rRNA + 5'-deoxyadenosine + L-methionine + 2 oxidized [2Fe-2S]-[ferredoxin] + S-adenosyl-L-homocysteine. It catalyses the reaction adenosine(37) in tRNA + 2 reduced [2Fe-2S]-[ferredoxin] + 2 S-adenosyl-L-methionine = 2-methyladenosine(37) in tRNA + 5'-deoxyadenosine + L-methionine + 2 oxidized [2Fe-2S]-[ferredoxin] + S-adenosyl-L-homocysteine. Specifically methylates position 2 of adenine 2503 in 23S rRNA and position 2 of adenine 37 in tRNAs. The protein is Probable dual-specificity RNA methyltransferase RlmN of Rippkaea orientalis (strain PCC 8801 / RF-1) (Cyanothece sp. (strain PCC 8801)).